Reading from the N-terminus, the 429-residue chain is MLDPKLLRDDPAKLIERLNTRGGDFTEVIEQLVALDSQRRASQTAFNRAQAEGNQIGKQVGERLRRGTAVGDPEVLALKQRGIDLKATLALLQDQERELAERFAALLPTLPNVPRPEVPIGKDENDNREMRFWGTPPIFDFEPAAHWDLGERLGLMNFARATLVAQARFVTLMGDGALLERALIAFMLDRHRAHGYIEILPPYLVNTASMTGTGQLPKFAEDSFRCRDDDLWLIPTAEVPVTNLYRDEILTDMQLPIHHCAFTPCFRREAGSYGRDTRGLIRLHQFHKVELVKFCRPEHSPTEHEKLVADAEDVLQQLELPYRVIELCTGDLGFGAARCFDLEVWLPSQNRYREISSCSNFEDFQARRANLRFKAPDKKGTEFVHTLNGSGLAVGRTFAAILENYQNRDGTVRVPEALKPYVRRDVLSR.

236–238 (TAE) provides a ligand contact to L-serine. 267 to 269 (RRE) provides a ligand contact to ATP. An L-serine-binding site is contributed by glutamate 290. 354-357 (EISS) provides a ligand contact to ATP. L-serine is bound at residue serine 390.

The protein belongs to the class-II aminoacyl-tRNA synthetase family. Type-1 seryl-tRNA synthetase subfamily. As to quaternary structure, homodimer. The tRNA molecule binds across the dimer.

It is found in the cytoplasm. It catalyses the reaction tRNA(Ser) + L-serine + ATP = L-seryl-tRNA(Ser) + AMP + diphosphate + H(+). The enzyme catalyses tRNA(Sec) + L-serine + ATP = L-seryl-tRNA(Sec) + AMP + diphosphate + H(+). The protein operates within aminoacyl-tRNA biosynthesis; selenocysteinyl-tRNA(Sec) biosynthesis; L-seryl-tRNA(Sec) from L-serine and tRNA(Sec): step 1/1. Its function is as follows. Catalyzes the attachment of serine to tRNA(Ser). Is also able to aminoacylate tRNA(Sec) with serine, to form the misacylated tRNA L-seryl-tRNA(Sec), which will be further converted into selenocysteinyl-tRNA(Sec). The chain is Serine--tRNA ligase from Gloeobacter violaceus (strain ATCC 29082 / PCC 7421).